A 608-amino-acid chain; its full sequence is 65-kDa microtubule-associated protein 6 (608 aa).

3 coiled-coil regions span residues D164–D186, E368–K388, and V467–Q503. The tract at residues L501–N565 is disordered. The segment covering S510–P523 has biased composition (low complexity). S513 carries the phosphoserine modification. The segment covering F526–V535 has biased composition (polar residues). The residue at position 604 (S604) is a Phosphoserine.

Belongs to the MAP65/ASE1 family. In terms of assembly, forms a dimer. Binds to polymerized centrally located endocytic MT.

It is found in the nucleus. The protein resides in the cytoplasm. The protein localises to the mitochondrion. It localises to the cytoskeleton. Its subcellular location is the phragmoplast. Its function is as follows. Microtubule-associated protein that mediates the formation of a mesh-like stable and dense network formed by individual microtubules (MT). Confers MT resistance to high concentration of NaCl. This is 65-kDa microtubule-associated protein 6 (MAP65-6) from Arabidopsis thaliana (Mouse-ear cress).